Here is a 460-residue protein sequence, read N- to C-terminus: Crocetin glucosyltransferase 2 (460 aa).

His-19 serves as the catalytic Proton acceptor. His-19 contacts an anthocyanidin. Residues Thr-133, Gln-333, His-348, Trp-351, Asn-352, Ser-353, Glu-356, Asp-372, and Gln-373 each contribute to the UDP-alpha-D-glucose site.

It belongs to the UDP-glycosyltransferase family. As to expression, mainly expressed in fully developed stigmas.

The enzyme catalyses crocetin + UDP-alpha-D-glucose = beta-D-glucosyl crocetin + UDP. It catalyses the reaction beta-D-glucosyl crocetin + UDP-alpha-D-glucose = bis(beta-D-glucosyl) crocetin + UDP. It carries out the reaction beta-D-gentiobiosyl crocetin + UDP-alpha-D-glucose = beta-D-gentiobiosyl beta-D-glucosyl crocetin + UDP. Functionally, crocetin glucosyltransferase involved in the synthesis of crocin, one of the apocarotenoids responsible for the color and bitter taste of saffron. This chain is Crocetin glucosyltransferase 2 (GLT2), found in Crocus sativus (Saffron).